The chain runs to 311 residues: Pyrimidine-specific ribonucleoside hydrolase RihA (311 aa).

His240 is a catalytic residue.

Belongs to the IUNH family. RihA subfamily.

In terms of biological role, hydrolyzes cytidine or uridine to ribose and cytosine or uracil, respectively. The polypeptide is Pyrimidine-specific ribonucleoside hydrolase RihA (Salmonella paratyphi C (strain RKS4594)).